A 202-amino-acid chain; its full sequence is Polyamine-modulated factor 1 (202 aa).

Basic and acidic residues predominate over residues 1 to 15; that stretch reads MAEVSRDSEAAERGP. The interval 1 to 26 is disordered; sequence MAEVSRDSEAAERGPEGSSPEAVPGD. A coiled-coil region spans residues 153 to 194; it reads EAKNQELADAVLAGRRQVEELQQQVRALQQTWQALHREQREL.

Component of the MIS12 complex composed of MIS12, DSN1, NSL1 and PMF1. Interacts with COPS7A. Interacts via its coiled-coil domain with the leucine-zipper domain of NFE2L2. The interaction with NFE2L2 is required for the transcriptional regulation of SSAT.

It is found in the nucleus. It localises to the chromosome. The protein localises to the centromere. Its subcellular location is the kinetochore. Functionally, part of the MIS12 complex which is required for normal chromosome alignment and segregation and for kinetochore formation during mitosis. May act as a cotranscription partner of NFE2L2 involved in regulation of polyamine-induced transcription of SSAT. The polypeptide is Polyamine-modulated factor 1 (Mus musculus (Mouse)).